Here is a 569-residue protein sequence, read N- to C-terminus: Synaptotagmin-4 (569 aa).

Residues 1–21 (MGFLFGLFIGIAVSFGLVVAF) traverse the membrane as a helical segment. Positions 67–251 (QRQKLNWLNL…WPVRKIIPIL (185 aa)) constitute an SMP-LTD domain. Residues 229–531 (EETIRDAIED…KIGRVIMTLT (303 aa)) are phospholipid binding. C2 domains are found at residues 245 to 366 (RKII…DIWL) and 426 to 543 (TDMK…QEWF). Residues D459, D465, D514, D516, and D521 each coordinate Ca(2+).

This sequence belongs to the synaptotagmin family. Ca(2+) serves as cofactor.

The protein resides in the membrane. Functionally, may be involved in membrane trafficking. The chain is Synaptotagmin-4 (SYT4) from Arabidopsis thaliana (Mouse-ear cress).